The following is a 72-amino-acid chain: Large ribosomal subunit protein uL29 (72 aa).

This sequence belongs to the universal ribosomal protein uL29 family.

This Microcystis aeruginosa (strain NIES-843 / IAM M-2473) protein is Large ribosomal subunit protein uL29.